A 524-amino-acid polypeptide reads, in one-letter code: 5'-AMP-activated protein kinase subunit gamma-2 (524 aa).

Residues 1-178 are disordered; that stretch reads MPLLDGDLEG…TRPPLASPTH (178 aa). Residues Ser-21, Ser-27, Ser-29, Ser-46, Ser-94, Ser-99, Ser-117, and Ser-118 each carry the phosphoserine modification. Over residues 112 to 123 the composition is skewed to low complexity; the sequence is TSGLSSSPSTPT. Residue Thr-121 is modified to Phosphothreonine. Positions 135–145 are enriched in basic and acidic residues; it reads SYKHEPERLEN. The span at 148-168 shows a compositional bias: polar residues; sequence YASSSPPDTGQRFCPSSFQSP. Ser-152 is subject to Phosphoserine. 3 CBS domains span residues 230-290, 312-370, and 385-447; these read PTSS…KSPM, TFKP…MSDM, and IGTY…NLDI. Residues Arg-257, 272-277, Val-317, 338-339, and Lys-357 contribute to the ADP site; these read MLTITD and HR. AMP contacts are provided by residues Arg-257, 272–277, Val-317, His-338, 338–339, Lys-357, Thr-387, Ala-392, 413–414, 429–432, Arg-456, His-485, 485–486, and 501–504; these read MLTITD, HR, SA, SKFD, and SLSD. ATP-binding positions include Arg-257, 272 to 277, Val-317, 338 to 339, Arg-339, and Lys-357; these read MLTITD and HR. The short motif at 325 to 346 is the AMPK pseudosubstrate element; it reads LLDAVYSLIKNKIHRLPVIDPI. ADP-binding positions include 429–432, Arg-456, and 485–486; these read SKFD and HR. Residues 429-432, Arg-456, and 485-486 contribute to the ATP site; these read SKFD and HR. The CBS 4 domain maps to 459–517; it reads YFEGVVKCNKLEILETIVDRIVRAEVHRLVVANEADSIVGIISLSDILQALILTPAGAK.

It belongs to the 5'-AMP-activated protein kinase gamma subunit family. AMPK is a heterotrimer of an alpha catalytic subunit (PRKAA1 or PRKAA2), a beta (PRKAB1 or PRKAB2) and a gamma non-catalytic subunits (PRKAG1, PRKAG2 or PRKAG3). Interacts with FNIP1 and FNIP2. Post-translationally, phosphorylated by ULK1; leading to negatively regulate AMPK activity and suggesting the existence of a regulatory feedback loop between ULK1 and AMPK. In terms of processing, glycosylated; O-GlcNAcylated by OGT, promoting the AMP-activated protein kinase (AMPK) activity.

Functionally, AMP/ATP-binding subunit of AMP-activated protein kinase (AMPK), an energy sensor protein kinase that plays a key role in regulating cellular energy metabolism. In response to reduction of intracellular ATP levels, AMPK activates energy-producing pathways and inhibits energy-consuming processes: inhibits protein, carbohydrate and lipid biosynthesis, as well as cell growth and proliferation. AMPK acts via direct phosphorylation of metabolic enzymes, and by longer-term effects via phosphorylation of transcription regulators. Also acts as a regulator of cellular polarity by remodeling the actin cytoskeleton; probably by indirectly activating myosin. Gamma non-catalytic subunit mediates binding to AMP, ADP and ATP, leading to activate or inhibit AMPK: AMP-binding results in allosteric activation of alpha catalytic subunit (PRKAA1 or PRKAA2) both by inducing phosphorylation and preventing dephosphorylation of catalytic subunits. ADP also stimulates phosphorylation, without stimulating already phosphorylated catalytic subunit. ATP promotes dephosphorylation of catalytic subunit, rendering the AMPK enzyme inactive. This is 5'-AMP-activated protein kinase subunit gamma-2 (PRKAG2) from Pongo abelii (Sumatran orangutan).